A 74-amino-acid chain; its full sequence is Peptide BmKa2 (74 aa).

A signal peptide spans 1–24 (MSSKTLLVLLLVGVLVSTFFTADA).

The protein belongs to the non-disulfide-bridged peptide (NDBP) superfamily. Long chain multifunctional peptide (group 2) family. Expressed by the venom gland.

The protein resides in the secreted. Its function is as follows. Highly acidic peptide that may have antibacterial activity. The sequence is that of Peptide BmKa2 from Olivierus martensii (Manchurian scorpion).